A 348-amino-acid polypeptide reads, in one-letter code: MSESRITYKDAGVDIDAGNTFVKMIKPLVKATSRPEVIADIGGFGGLFSLNSSKYKNPVLVSGTDGVGTKLKIAFLANRHDTIGIDLVAMCVNDIIVQGAEPLFFLDYLATAKLDPEKGASIIKGVSEGCIQAGCALIGGETAEMPGFYSGDEYDMAGFAVGVVDRDKIIDGSSITVGNRLIGIASSGLHSNGYSLARKIIFDKMGLGIDDIIPGLDKTVADELLTPTRIYVRSILNLLRDFPINGIAHITGGGLLENIPRILPNGCKALVHKNSWQPPPIYQILQNAGNIEENELFRTFNCGIGMVLAVPEKEADEVLIRLSGLNEHAFVIGEIAKCEAGSECVEMI.

This sequence belongs to the AIR synthase family.

Its subcellular location is the cytoplasm. It carries out the reaction 2-formamido-N(1)-(5-O-phospho-beta-D-ribosyl)acetamidine + ATP = 5-amino-1-(5-phospho-beta-D-ribosyl)imidazole + ADP + phosphate + H(+). It functions in the pathway purine metabolism; IMP biosynthesis via de novo pathway; 5-amino-1-(5-phospho-D-ribosyl)imidazole from N(2)-formyl-N(1)-(5-phospho-D-ribosyl)glycinamide: step 2/2. This is Phosphoribosylformylglycinamidine cyclo-ligase from Geotalea uraniireducens (strain Rf4) (Geobacter uraniireducens).